The sequence spans 185 residues: Ribosome-recycling factor (185 aa).

The protein belongs to the RRF family.

The protein resides in the cytoplasm. In terms of biological role, responsible for the release of ribosomes from messenger RNA at the termination of protein biosynthesis. May increase the efficiency of translation by recycling ribosomes from one round of translation to another. In Francisella tularensis subsp. tularensis (strain FSC 198), this protein is Ribosome-recycling factor.